Consider the following 373-residue polypeptide: Glutamine synthetase (373 aa).

Threonine 2 is modified (N-acetylthreonine). Residues threonine 2–lysine 25 form a required for glutamine-induced ubiquitination by CRL4(CRBN) and proteasomal degradation region. Residues lysine 11 and lysine 14 each carry the N6-acetyllysine; by EP300 modification. Residues glutamate 24–arginine 106 enclose the GS beta-grasp domain. The residue at position 104 (tyrosine 104) is a Phosphotyrosine. The region spanning leucine 113–asparagine 373 is the GS catalytic domain. ATP is bound at residue glutamate 134. Mn(2+) is bound by residues glutamate 134, glutamate 136, glutamate 196, and glutamate 203. Glutamate 203 to proline 208 is an ATP binding site. Asparagine 246–tryptophan 247 contacts L-glutamate. Residue histidine 253 coordinates Mn(2+). ATP contacts are provided by residues asparagine 255–serine 257, arginine 319, and arginine 324. Arginine 319 lines the L-glutamate pocket. Tyrosine 336 to glutamate 338 provides a ligand contact to ADP. Glutamate 338 serves as a coordination point for Mn(2+). Residue arginine 340 participates in L-glutamate binding. Serine 343 is subject to Phosphoserine.

The protein belongs to the glutamine synthetase family. As to quaternary structure, decamer; composed of two pentamers. Interacts with PALMD. Interacts with RHOJ. Interacts with BEST2; this interaction tethers a fraction of GLUL to the membrane, causing a decrease of cytosolic glutamine synthase (GS) activity and inhibits the chloride channel activity of BEST2 by affecting the gating at the aperture in the absence of intracellular glutamate. The cofactor is Mg(2+). It depends on Mn(2+) as a cofactor. In terms of processing, acetylated by EP300/p300; acetylation is stimulated by increased glutamine levels and promotes ubiquitin-mediated proteasomal degradation. Post-translationally, palmitoylated; undergoes autopalmitoylation. Ubiquitinated by ZNRF1. Ubiquitinated by the DCX (DDB1-CUL4-X-box) E3 ubiquitin-protein ligase complex called CRL4(CRBN), leading to proteasomal degradation. In terms of tissue distribution, expressed in endothelial cells.

The protein resides in the cytoplasm. It is found in the cytosol. It localises to the microsome. The protein localises to the mitochondrion. Its subcellular location is the cell membrane. It carries out the reaction L-glutamate + NH4(+) + ATP = L-glutamine + ADP + phosphate + H(+). The enzyme catalyses L-cysteinyl-[protein] + hexadecanoyl-CoA = S-hexadecanoyl-L-cysteinyl-[protein] + CoA. Its activity is regulated as follows. Glutamine synthetase activity is inhibited by methionine sulfoximine (MSO). In terms of biological role, glutamine synthetase that catalyzes the ATP-dependent conversion of glutamate and ammonia to glutamine. Its role depends on tissue localization: in the brain, it regulates the levels of toxic ammonia and converts neurotoxic glutamate to harmless glutamine, whereas in the liver, it is one of the enzymes responsible for the removal of ammonia. Plays a key role in ammonium detoxification during erythropoiesis: the glutamine synthetase activity is required to remove ammonium generated by porphobilinogen deaminase (HMBS) during heme biosynthesis to prevent ammonium accumulation and oxidative stress. Essential for proliferation of fetal skin fibroblasts. Independently of its glutamine synthetase activity, required for endothelial cell migration during vascular development: acts by regulating membrane localization and activation of the GTPase RHOJ, possibly by promoting RHOJ palmitoylation. May act as a palmitoyltransferase for RHOJ: able to autopalmitoylate and then transfer the palmitoyl group to RHOJ. Plays a role in ribosomal 40S subunit biogenesis. Through the interaction with BEST2, inhibits BEST2 channel activity by affecting the gating at the aperture in the absence of intracellular L-glutamate, but sensitizes BEST2 to intracellular L-glutamate, which promotes the opening of BEST2 and thus relieves its inhibitory effect on BEST2. This Homo sapiens (Human) protein is Glutamine synthetase.